Here is an 807-residue protein sequence, read N- to C-terminus: Protein FAR1-RELATED SEQUENCE 2 (807 aa).

Positions 52-138 (YFYREYARSV…VKEHNHEICP (87 aa)) constitute an FAR1 domain. Positions 219 to 315 (VVLFDTFYVR…CLWSVLSKIS (97 aa)) constitute an MULE domain. The SWIM-type zinc-finger motif lies at 499-535 (FFVALNNELLDACCSCHLFEYQGFLCKHAILVLQSAD). The stretch at 660–680 (EDATNRSEELRQETEQVSSRA) forms a coiled coil. Residues 788 to 798 (GSSQFQGSDSS) show a composition bias toward polar residues. The tract at residues 788-807 (GSSQFQGSDSSHPSDHRLSN) is disordered.

Belongs to the FHY3/FAR1 family. In terms of tissue distribution, expressed in hypocotyls, rosette and cauline leaves, inflorescences stems, flowers and siliques.

The protein resides in the nucleus. In terms of biological role, putative transcription activator involved in regulating light control of development. The chain is Protein FAR1-RELATED SEQUENCE 2 (FRS2) from Arabidopsis thaliana (Mouse-ear cress).